The sequence spans 825 residues: Hypoxia-inducible factor 1-alpha (825 aa).

Positions 1-30 (MEGAGGENEKKKMSSERRKEKSRDAARSRR) are disordered. The interaction with TSGA10 stretch occupies residues 1–401 (MEGAGGENEK…KEPDALTLLA (401 aa)). Residues 7–30 (ENEKKKMSSERRKEKSRDAARSRR) are compositionally biased toward basic and acidic residues. Positions 17–70 (RRKEKSRDAARSRRSKESEVFYELAHQLPLPHNVSSHLDKASVMRLTISYLRVR) constitute a bHLH domain. The tract at residues 21–30 (KSRDAARSRR) is DNA-binding. The PAS 1 domain maps to 85–158 (KAQMNCFYLK…THRNGPVRKG (74 aa)). A required for heterodimer formation with ARNT region spans residues 170–191 (RMKCTLTSRGRTMNIKSATWKV). The PAS 2 domain maps to 228–298 (PHPSNIEIPL…KTHHDMFTKG (71 aa)). Residue S247 is modified to Phosphoserine; by CK1. Residues 302–345 (TGQYRMLAKRGGYVWVETQATVIYNTKDSQPQCIVCVNYVVSGI) enclose the PAC domain. The segment at 401–602 (APAAGDTIIS…STVTGFQQTQ (202 aa)) is ODD. The residue at position 402 (P402) is a 4-hydroxyproline. Residues 492-516 (QIQDQPASPSDGSTRQSSPEPNSPS) are compositionally biased toward polar residues. Residues 492–520 (QIQDQPASPSDGSTRQSSPEPNSPSEYCF) form a disordered region. Residues 530–574 (FKLELVEKLFAEDTEAKNPFSAQDTDLDLEMLAPYIPMDDDFQLR) form an NTAD region. K531 is modified (N6-acetyllysine; alternate). K531 is covalently cross-linked (Glycyl lysine isopeptide (Lys-Gly) (interchain with G-Cter in ubiquitin); alternate). Residues K537 and K546 each participate in a glycyl lysine isopeptide (Lys-Gly) (interchain with G-Cter in ubiquitin) cross-link. The residue at position 550 (S550) is a Phosphoserine; by GSK3-beta. Position 554 is a phosphothreonine; by GSK3-beta (T554). Residue P563 is modified to 4-hydroxyproline. S575 carries the post-translational modification Phosphoserine; by PLK3. Residues 575 to 784 (SFDQLSPLES…SDLACRLLGQ (210 aa)) are ID. Disordered regions lie at residues 579 to 602 (LSPLESNSPSPPSVSTVTGFQQTQ) and 654 to 674 (AKASAYSGTHSRTASPDRAGK). The residue at position 588 (S588) is a Phosphoserine; by GSK3-beta. The segment covering 654–667 (AKASAYSGTHSRTA) has biased composition (polar residues). S657 is modified (phosphoserine; by PLK3). The short motif at 717 to 721 (RKRKM) is the Nuclear localization signal element. The interval 785-825 (SMDESGLPQLTSYDCEVNAPIQGSRNLLQGEELLRALDQVN) is CTAD. C799 is subject to S-nitrosocysteine. N802 is modified ((3S)-3-hydroxyasparagine).

As to quaternary structure, interacts with the ARNT; forms a heterodimer that binds core DNA sequence 5'-TACGTG-3' within the hypoxia response element (HRE) of target gene promoters. Interacts with COPS5; the interaction increases the transcriptional activity of HIF1A through increased stability. Interacts with EP300 (via TAZ-type 1 domains); the interaction is stimulated in response to hypoxia and inhibited by CITED2. Interacts with CREBBP (via TAZ-type 1 domains). Interacts with NCOA1, NCOA2, APEX1 and HSP90. Interacts (hydroxylated within the ODD domain) with VHLL (via beta domain); the interaction, leads to polyubiquitination and subsequent HIF1A proteasomal degradation. During hypoxia, sumoylated HIF1A also binds VHL; the interaction promotes the ubiquitination of HIF1A. Interacts with SENP1; the interaction desumoylates HIF1A resulting in stabilization and activation of transcription. Interacts (via the ODD domain) with NAA10; the interaction appears not to acetylate HIF1A nor have any affect on protein stability, during hypoxia. Interacts with RWDD3; the interaction enhances HIF1A sumoylation. Interacts with TSGA10. Interacts with HIF3A. Interacts with RORA (via the DNA binding domain); the interaction enhances HIF1A transcription under hypoxia through increasing protein stability. Interaction with PSMA7 inhibits the transactivation activity of HIF1A under both normoxic and hypoxia-mimicking conditions. Interacts with USP20. Interacts with RACK1; promotes HIF1A ubiquitination and proteasome-mediated degradation. Interacts (via N-terminus) with USP19. Interacts with SIRT2. Interacts (deacetylated form) with EGLN1. Interacts with CBFA2T3. Interacts with HSP90AA1 and HSP90AB1. Interacts with DCUN1D1; this interaction increases the interaction between VHL and DCUN1D1. Interacts with HIF1AN. Post-translationally, S-nitrosylation of Cys-799 may be responsible for increased recruitment of p300 coactivator necessary for transcriptional activity of HIF-1 complex. Acetylation of Lys-531 by ARD1 increases interaction with VHL and stimulates subsequent proteasomal degradation. Deacetylated by SIRT2 increases its interaction with and hydroxylation by EGLN1 thereby inactivating HIF1A activity by inducing its proteasomal degradation. In terms of processing, ubiquitinated; in normoxia, following hydroxylation and interaction with VHL. Lys-531 appears to be the principal site of ubiquitination. Clioquinol, the Cu/Zn-chelator, inhibits ubiquitination through preventing hydroxylation at Asn-802. Ubiquitinated by E3 ligase VHL. Deubiquitinated by UCHL1. Post-translationally, requires phosphorylation for DNA-binding. Phosphorylation at Ser-247 by CSNK1D/CK1 represses kinase activity and impairs ARNT binding. Phosphorylation by GSK3-beta and PLK3 promote degradation by the proteasome. The iron and 2-oxoglutarate dependent 3-hydroxylation of asparagine is (S) stereospecific within HIF CTAD domains. In terms of processing, sumoylated; with SUMO1 under hypoxia. Sumoylation is enhanced through interaction with RWDD3. Both sumoylation and desumoylation seem to be involved in the regulation of its stability during hypoxia. Sumoylation can promote either its stabilization or its VHL-dependent degradation by promoting hydroxyproline-independent HIF1A-VHL complex binding, thus leading to HIF1A ubiquitination and proteasomal degradation. Desumoylation by SENP1 increases its stability amd transcriptional activity. There is a disaccord between various publications on the effect of sumoylation and desumoylation on its stability and transcriptional activity. Post-translationally, in normoxia, is hydroxylated on Pro-402 and Pro-563 in the oxygen-dependent degradation domain (ODD) by EGLN1/PHD2 and EGLN2/PHD1. EGLN3/PHD3 has also been shown to hydroxylate Pro-563. The hydroxylated prolines promote interaction with VHL, initiating rapid ubiquitination and subsequent proteasomal degradation. Deubiquitinated by USP20. Under hypoxia, proline hydroxylation is impaired and ubiquitination is attenuated, resulting in stabilization. In normoxia, is hydroxylated on Asn-802 by HIF1AN, thus abrogating interaction with CREBBP and EP300 and preventing transcriptional activation. Repressed by iron ion, via Fe(2+) prolyl hydroxylase (PHD) enzymes-mediated hydroxylation and subsequent proteasomal degradation. Expressed in the kidney, higher expression is seen in the renal medulla than in the cortex. Expressed also in the perivenous zone of the liver.

Its subcellular location is the cytoplasm. The protein resides in the nucleus. The protein localises to the nucleus speckle. Induced by reactive oxygen species (ROS). In terms of biological role, functions as a master transcriptional regulator of the adaptive response to hypoxia. Under hypoxic conditions, activates the transcription of over 40 genes, including erythropoietin, glucose transporters, glycolytic enzymes, vascular endothelial growth factor, HILPDA, and other genes whose protein products increase oxygen delivery or facilitate metabolic adaptation to hypoxia. Plays an essential role in embryonic vascularization, tumor angiogenesis and pathophysiology of ischemic disease. Heterodimerizes with ARNT; heterodimer binds to core DNA sequence 5'-TACGTG-3' within the hypoxia response element (HRE) of target gene promoters. Activation requires recruitment of transcriptional coactivators such as CREBBP and EP300. Activity is enhanced by interaction with NCOA1 and/or NCOA2. Interaction with redox regulatory protein APEX1 seems to activate CTAD and potentiates activation by NCOA1 and CREBBP. Involved in the axonal distribution and transport of mitochondria in neurons during hypoxia. This is Hypoxia-inducible factor 1-alpha (Hif1a) from Rattus norvegicus (Rat).